Reading from the N-terminus, the 161-residue chain is Large ribosomal subunit protein uL10 (161 aa).

It belongs to the universal ribosomal protein uL10 family. In terms of assembly, part of the ribosomal stalk of the 50S ribosomal subunit. The N-terminus interacts with L11 and the large rRNA to form the base of the stalk. The C-terminus forms an elongated spine to which L12 dimers bind in a sequential fashion forming a multimeric L10(L12)X complex.

In terms of biological role, forms part of the ribosomal stalk, playing a central role in the interaction of the ribosome with GTP-bound translation factors. The polypeptide is Large ribosomal subunit protein uL10 (Campylobacter curvus (strain 525.92)).